The chain runs to 226 residues: MTILVVTGTGTGVGKTVVCAALASAARQAGIDVAVCKPVQTGTARGDDDLAEVGRLAGVTQLAGLARYPQPMAPAAAAEHAGMALPARDQIVRLIADLDRPGRLTLVEGAGGLLVELAEPGVTLRDVAVDVAAAALVVVTADLGTLNHTKLTLEALAAQQVSCAGLVIGSWPDPPGLVAASNRSALARIATVRAALPAGAASLDAGDFAAMSAAAFDRNWVAGLVG.

Residue 12-17 (GVGKTV) coordinates ATP. A Mg(2+)-binding site is contributed by threonine 16. The active site involves lysine 37. Threonine 41 provides a ligand contact to substrate. ATP contacts are provided by residues aspartate 49, 108–111 (EGAG), 169–170 (GS), and 197–199 (PAG). The Mg(2+) site is built by aspartate 49 and glutamate 108.

The protein belongs to the dethiobiotin synthetase family. Homodimer. The cofactor is Mg(2+).

It localises to the cytoplasm. The catalysed reaction is (7R,8S)-7,8-diammoniononanoate + CO2 + ATP = (4R,5S)-dethiobiotin + ADP + phosphate + 3 H(+). It participates in cofactor biosynthesis; biotin biosynthesis; biotin from 7,8-diaminononanoate: step 1/2. Its function is as follows. Catalyzes a mechanistically unusual reaction, the ATP-dependent insertion of CO2 between the N7 and N8 nitrogen atoms of 7,8-diaminopelargonic acid (DAPA, also called 7,8-diammoniononanoate) to form a ureido ring. The protein is ATP-dependent dethiobiotin synthetase BioD of Mycobacterium bovis (strain ATCC BAA-935 / AF2122/97).